The chain runs to 130 residues: Large ribosomal subunit protein bL20 (130 aa).

The protein belongs to the bacterial ribosomal protein bL20 family.

Functionally, binds directly to 23S ribosomal RNA and is necessary for the in vitro assembly process of the 50S ribosomal subunit. It is not involved in the protein synthesizing functions of that subunit. The sequence is that of Large ribosomal subunit protein bL20 from Clavibacter sepedonicus (Clavibacter michiganensis subsp. sepedonicus).